Reading from the N-terminus, the 413-residue chain is uncharacterized protein (413 aa).

This is an uncharacterized protein from Mycobacterium tuberculosis (strain ATCC 25618 / H37Rv).